A 458-amino-acid chain; its full sequence is Argininosuccinate lyase (458 aa).

Belongs to the lyase 1 family. Argininosuccinate lyase subfamily.

The protein resides in the cytoplasm. It carries out the reaction 2-(N(omega)-L-arginino)succinate = fumarate + L-arginine. The protein operates within amino-acid biosynthesis; L-arginine biosynthesis; L-arginine from L-ornithine and carbamoyl phosphate: step 3/3. This Bacillus velezensis (strain DSM 23117 / BGSC 10A6 / LMG 26770 / FZB42) (Bacillus amyloliquefaciens subsp. plantarum) protein is Argininosuccinate lyase.